The chain runs to 349 residues: MSELQPIFDRLYQGQTISREETKALFSEIVEGKMDPVAMAGMLVAMKMRGETIDEISGAADALLQAAKAFPAPSEATRTQGIVDIVGTGGDGHNTINISTTSAFVAAAAGAKVAKHGNRSVSSKSGSSDLLAQFGIDLTMAPETARDCLDDLGLCFLFAPHYHGGVRHAVPVRQALKTRTLFNVLGPLINPARPDYMLLGVYDPMLVRPICDVLKALDVKRAMVVHGSGLDEVAVHGETLVCELKQGEIVEYYLSPEALGLSRAAISDLAGAGPAENAEITRAILQGHGELAHTEAVAANAGCALYVSGCCDSPQQGTALALQTLASGKAYILLQQLASASQSDNLGTN.

Residues G87, 90–91 (GD), T95, 97–100 (NIST), 115–123 (KHGNRSVSS), and S127 contribute to the 5-phospho-alpha-D-ribose 1-diphosphate site. An anthranilate-binding site is contributed by G87. Residue S99 participates in Mg(2+) binding. N118 is a binding site for anthranilate. An anthranilate-binding site is contributed by R173. Residues D231 and E232 each coordinate Mg(2+).

Belongs to the anthranilate phosphoribosyltransferase family. As to quaternary structure, homodimer. It depends on Mg(2+) as a cofactor.

It carries out the reaction N-(5-phospho-beta-D-ribosyl)anthranilate + diphosphate = 5-phospho-alpha-D-ribose 1-diphosphate + anthranilate. Its pathway is amino-acid biosynthesis; L-tryptophan biosynthesis; L-tryptophan from chorismate: step 2/5. Its function is as follows. Catalyzes the transfer of the phosphoribosyl group of 5-phosphorylribose-1-pyrophosphate (PRPP) to anthranilate to yield N-(5'-phosphoribosyl)-anthranilate (PRA). The polypeptide is Anthranilate phosphoribosyltransferase (Shewanella loihica (strain ATCC BAA-1088 / PV-4)).